A 449-amino-acid polypeptide reads, in one-letter code: Chromosomal replication initiator protein DnaA (449 aa).

The tract at residues Met-1 to Leu-72 is domain I, interacts with DnaA modulators. A domain II region spans residues Leu-72–Thr-109. The domain III, AAA+ region stretch occupies residues His-110–Ser-326. ATP contacts are provided by Gly-154, Gly-156, Lys-157, and Thr-158. The interval Thr-327–Gly-449 is domain IV, binds dsDNA.

The protein belongs to the DnaA family. Oligomerizes as a right-handed, spiral filament on DNA at oriC.

The protein resides in the cytoplasm. Plays an essential role in the initiation and regulation of chromosomal replication. ATP-DnaA binds to the origin of replication (oriC) to initiate formation of the DNA replication initiation complex once per cell cycle. Binds the DnaA box (a 9 base pair repeat at the origin) and separates the double-stranded (ds)DNA. Forms a right-handed helical filament on oriC DNA; dsDNA binds to the exterior of the filament while single-stranded (ss)DNA is stabiized in the filament's interior. The ATP-DnaA-oriC complex binds and stabilizes one strand of the AT-rich DNA unwinding element (DUE), permitting loading of DNA polymerase. After initiation quickly degrades to an ADP-DnaA complex that is not apt for DNA replication. Binds acidic phospholipids. In Lacticaseibacillus casei (strain BL23) (Lactobacillus casei), this protein is Chromosomal replication initiator protein DnaA.